A 361-amino-acid polypeptide reads, in one-letter code: Molybdenum import ATP-binding protein ModC (361 aa).

Residues 1-235 (MDGLRLRFRR…VDLPLALDDD (235 aa)) form the ABC transporter domain. Position 33-40 (33-40 (GHSGSGKS)) interacts with ATP. The Mop domain maps to 296 to 361 (QSSILNRLPV…AQIKSVAVLA (66 aa)).

It belongs to the ABC transporter superfamily. Molybdate importer (TC 3.A.1.8) family. As to quaternary structure, the complex is composed of two ATP-binding proteins (ModC), two transmembrane proteins (ModB) and a solute-binding protein (ModA).

Its subcellular location is the cell inner membrane. It catalyses the reaction molybdate(out) + ATP + H2O = molybdate(in) + ADP + phosphate + H(+). In terms of biological role, part of the ABC transporter complex ModABC involved in molybdenum import. Responsible for energy coupling to the transport system. This is Molybdenum import ATP-binding protein ModC from Pseudomonas aeruginosa (strain ATCC 15692 / DSM 22644 / CIP 104116 / JCM 14847 / LMG 12228 / 1C / PRS 101 / PAO1).